The chain runs to 256 residues: Acetyl-coenzyme A carboxylase carboxyl transferase subunit alpha (256 aa).

One can recognise a CoA carboxyltransferase C-terminal domain in the interval methionine 1–glutamine 236.

Belongs to the AccA family. As to quaternary structure, acetyl-CoA carboxylase is a heterohexamer composed of biotin carboxyl carrier protein (AccB), biotin carboxylase (AccC) and two subunits each of ACCase subunit alpha (AccA) and ACCase subunit beta (AccD).

It localises to the cytoplasm. It catalyses the reaction N(6)-carboxybiotinyl-L-lysyl-[protein] + acetyl-CoA = N(6)-biotinyl-L-lysyl-[protein] + malonyl-CoA. Its pathway is lipid metabolism; malonyl-CoA biosynthesis; malonyl-CoA from acetyl-CoA: step 1/1. Its function is as follows. Component of the acetyl coenzyme A carboxylase (ACC) complex. First, biotin carboxylase catalyzes the carboxylation of biotin on its carrier protein (BCCP) and then the CO(2) group is transferred by the carboxyltransferase to acetyl-CoA to form malonyl-CoA. The protein is Acetyl-coenzyme A carboxylase carboxyl transferase subunit alpha of Streptococcus equi subsp. equi (strain 4047).